A 284-amino-acid chain; its full sequence is Tropomyosin alpha-1 chain (284 aa).

A disordered region spans residues 1-38 (MDAIKKKMQMLKLDKENALDRAEQAEADKKGAEDKSKQ). The stretch at 1-284 (MDAIKKKMQM…DHALNDMTSI (284 aa)) forms a coiled coil. The segment covering 12–38 (KLDKENALDRAEQAEADKKGAEDKSKQ) has biased composition (basic and acidic residues).

It belongs to the tropomyosin family. In terms of assembly, homodimer. Heterodimer of an alpha (TPM1, TPM3 or TPM4) and a beta (TPM2) chain.

The protein resides in the cytoplasm. It is found in the cytoskeleton. Its function is as follows. Binds to actin filaments in muscle and non-muscle cells. Plays a central role, in association with the troponin complex, in the calcium dependent regulation of vertebrate striated muscle contraction. Smooth muscle contraction is regulated by interaction with caldesmon. In non-muscle cells is implicated in stabilizing cytoskeleton actin filaments. This Xenopus laevis (African clawed frog) protein is Tropomyosin alpha-1 chain (tpm1).